We begin with the raw amino-acid sequence, 430 residues long: Glutamate-1-semialdehyde 2,1-aminomutase (430 aa).

Lys265 carries the N6-(pyridoxal phosphate)lysine modification.

It belongs to the class-III pyridoxal-phosphate-dependent aminotransferase family. HemL subfamily. Pyridoxal 5'-phosphate serves as cofactor.

Its subcellular location is the cytoplasm. The enzyme catalyses (S)-4-amino-5-oxopentanoate = 5-aminolevulinate. It functions in the pathway porphyrin-containing compound metabolism; protoporphyrin-IX biosynthesis; 5-aminolevulinate from L-glutamyl-tRNA(Glu): step 2/2. The polypeptide is Glutamate-1-semialdehyde 2,1-aminomutase (Caldivirga maquilingensis (strain ATCC 700844 / DSM 13496 / JCM 10307 / IC-167)).